Here is a 92-residue protein sequence, read N- to C-terminus: Small ribosomal subunit protein uS19c (92 aa).

This sequence belongs to the universal ribosomal protein uS19 family.

The protein resides in the plastid. The protein localises to the chloroplast. Protein S19 forms a complex with S13 that binds strongly to the 16S ribosomal RNA. The chain is Small ribosomal subunit protein uS19c (rps19) from Anthoceros angustus (Hornwort).